We begin with the raw amino-acid sequence, 303 residues long: Movement protein (303 aa).

The span at 1-18 shows a compositional bias: polar residues; that stretch reads MSNIVSPFSGSSRTTSDV. Disordered stretches follow at residues 1 to 24 and 267 to 303; these read MSNIVSPFSGSSRTTSDVGKQAGG and EESESPSALGRGVKDSKSVSASSVAGLPVSSPTLRIK.

It belongs to the bromovirus movement protein family. Post-translationally, phosphorylated by host.

Its subcellular location is the host cell junction. It is found in the host plasmodesma. Its function is as follows. Transports viral genome to neighboring plant cells directly through plasmosdesmata, without any budding. The movement protein allows efficient cell to cell propagation, by bypassing the host cell wall barrier. Acts by forming a tubular structure at the host plasmodesmata, enlarging it enough to allow free passage of virion capsids. This is Movement protein from Brome mosaic virus (BMV).